We begin with the raw amino-acid sequence, 477 residues long: Aspartyl/glutamyl-tRNA(Asn/Gln) amidotransferase subunit B (477 aa).

It belongs to the GatB/GatE family. GatB subfamily. Heterotrimer of A, B and C subunits.

It catalyses the reaction L-glutamyl-tRNA(Gln) + L-glutamine + ATP + H2O = L-glutaminyl-tRNA(Gln) + L-glutamate + ADP + phosphate + H(+). The catalysed reaction is L-aspartyl-tRNA(Asn) + L-glutamine + ATP + H2O = L-asparaginyl-tRNA(Asn) + L-glutamate + ADP + phosphate + 2 H(+). Functionally, allows the formation of correctly charged Asn-tRNA(Asn) or Gln-tRNA(Gln) through the transamidation of misacylated Asp-tRNA(Asn) or Glu-tRNA(Gln) in organisms which lack either or both of asparaginyl-tRNA or glutaminyl-tRNA synthetases. The reaction takes place in the presence of glutamine and ATP through an activated phospho-Asp-tRNA(Asn) or phospho-Glu-tRNA(Gln). The chain is Aspartyl/glutamyl-tRNA(Asn/Gln) amidotransferase subunit B from Lactococcus lactis subsp. cremoris (strain SK11).